A 577-amino-acid chain; its full sequence is 2-hydroxyacyl-CoA lyase (577 aa).

Position 59 (E59) interacts with thiamine diphosphate. Residues T412–Y493 are thiamine pyrophosphate binding. Residues D462 and N489 each coordinate Mg(2+).

Belongs to the TPP enzyme family. As to quaternary structure, homotetramer. Mg(2+) serves as cofactor. The cofactor is thiamine diphosphate.

It carries out the reaction an (R)-2-hydroxy-long-chain-fatty acyl-CoA = a long-chain fatty aldehyde + formyl-CoA. The catalysed reaction is a 2-hydroxy-3-methyl fatty acyl-CoA = a 2-methyl-branched fatty aldehyde + formyl-CoA. In terms of biological role, catalyzes a carbon-carbon cleavage reaction; cleaves a 2-hydroxy-3-methylacyl-CoA into formyl-CoA and a 2-methyl-branched fatty aldehyde. The polypeptide is 2-hydroxyacyl-CoA lyase (Oryza sativa subsp. japonica (Rice)).